We begin with the raw amino-acid sequence, 229 residues long: Peptidase E (229 aa).

Active-site charge relay system residues include Ser-120, Asp-135, and His-157.

Belongs to the peptidase S51 family.

It is found in the cytoplasm. It carries out the reaction Dipeptidase E catalyzes the hydrolysis of dipeptides Asp-|-Xaa. It does not act on peptides with N-terminal Glu, Asn or Gln, nor does it cleave isoaspartyl peptides.. In terms of biological role, hydrolyzes dipeptides containing N-terminal aspartate residues. May play a role in allowing the cell to use peptide aspartate to spare carbon otherwise required for the synthesis of the aspartate family of amino acids. In Salmonella schwarzengrund (strain CVM19633), this protein is Peptidase E.